Here is a 66-residue protein sequence, read N- to C-terminus: uncharacterized protein (66 aa).

This is an uncharacterized protein from Schizosaccharomyces pombe (strain 972 / ATCC 24843) (Fission yeast).